Reading from the N-terminus, the 559-residue chain is Estrogen receptor beta (559 aa).

The tract at residues Met-1–Phe-155 is modulating. The disordered stretch occupies residues Thr-128–Gly-148. 2 NR C4-type zinc fingers span residues Cys-156–Cys-176 and Cys-192–Cys-216. The nuclear receptor DNA-binding region spans Cys-156–Met-221. The span at Arg-243 to Ser-254 shows a compositional bias: polar residues. The segment at Arg-243 to Pro-269 is disordered. The NR LBD domain maps to Thr-273–His-509. The segment at Ser-514 to Gln-559 is disordered. The span at Pro-538–Cys-551 shows a compositional bias: polar residues.

The protein belongs to the nuclear hormone receptor family. NR3 subfamily. Binds DNA as a homodimer. Can form a heterodimer with ER-alpha.

The protein localises to the nucleus. Binds estrogens with an affinity similar to that of ER-alpha, and activates expression of reporter genes containing estrogen response elements (ERE) in an estrogen-dependent manner. In Sparus aurata (Gilthead sea bream), this protein is Estrogen receptor beta (esr2).